A 647-amino-acid chain; its full sequence is Sodium/nucleoside cotransporter 1 (647 aa).

Residues 1–79 (MEDNTPRQRD…VRRFCREHTQ (79 aa)) lie on the Cytoplasmic side of the membrane. The disordered stretch occupies residues 34–58 (EGRAPGSDSSPAEVGGGWSKAGPEH). The helical transmembrane segment at 80–103 (LFRWICTGLLCTAFAAFLLIACLL) threads the bilayer. Residues 104–108 (DFQRA) are Extracellular-facing. A helical transmembrane segment spans residues 109–127 (LALFVLFCVVLFFLAHSLL). Over 128 to 146 (KRLLGPKLLRCVKPLRHPC) the chain is Cytoplasmic. Residues 147 to 166 (LNLWFKRGLALAAFLGLVLW) form a helical membrane-spanning segment. Over 167–177 (LVLDTAQRPEQ) the chain is Extracellular. A helical membrane pass occupies residues 178-194 (LVSFGGICVFILLLFAG). The Cytoplasmic segment spans residues 195–200 (SKHHRA). Residues 201 to 221 (VSWRAVSWGLGLQFALGLFVI) form a helical membrane-spanning segment. The Extracellular portion of the chain corresponds to 222-260 (RTEPGFIAFQWLGDQIQIFLSYTEAGSSFVFGEALVKDV). The chain crosses the membrane as a helical span at residues 261–282 (FAFQVLPIIVFFSCAMSVLYYV). Topologically, residues 283-293 (GLMQWVILKIS) are cytoplasmic. A helical membrane pass occupies residues 294-317 (WLMQATMGTTATETLSVAGNIFVS). Residues 318–336 (QTEAPLLIRPYLADMTLSE) are Extracellular-facing. The chain crosses the membrane as a helical span at residues 337-359 (IHVVMTGGYATIAGSLLGAYISF). The Cytoplasmic segment spans residues 360 to 365 (GIDAAS). A helical membrane pass occupies residues 366–385 (LIAASVMAAPCALALSKLVY). Residues 386 to 422 (PEVEESKFKREEGVKLTYGDAQNLLEAASSGAAMSVR) lie on the Extracellular side of the membrane. A helical membrane pass occupies residues 423 to 445 (VVTNIAANLIAFLAVLAFINAAL). Residues 446-456 (SWLGDMVDVQG) lie on the Cytoplasmic side of the membrane. A helical transmembrane segment spans residues 457–478 (LSFQLICSYVLRPVAFLMGVAW). Over 479–533 (EDCPVVAELLGMKLFLNEFVAYQELSGYKQRRLAGAEEWVGSRKQWISVRAEILT) the chain is Extracellular. A helical membrane pass occupies residues 534-557 (TYALCGFANFSSIGIMLGGLTSMV). Topologically, residues 558-568 (PQRKGDFSQIV) are cytoplasmic. A helical membrane pass occupies residues 569–591 (LRALCTGACVSLVNACVAGILYV). Topologically, residues 592–647 (PRGAEVDCVSFLNTTLSSSSFEVYQCCRQFFQSTSLEFSPEALDNCCRFYNHTICV) are extracellular. N-linked (GlcNAc...) asparagine glycosylation is found at Asn-604 and Asn-642.

The protein belongs to the concentrative nucleoside transporter (CNT) (TC 2.A.41) family. Post-translationally, N-glycosylated. N-glycosylation is required for localization to the plasma membrane and the transporter activity.

The protein localises to the cell membrane. It localises to the apical cell membrane. The catalysed reaction is uridine(out) + Na(+)(out) = uridine(in) + Na(+)(in). It carries out the reaction thymidine(out) + Na(+)(out) = thymidine(in) + Na(+)(in). The enzyme catalyses cytidine(out) + Na(+)(out) = cytidine(in) + Na(+)(in). It catalyses the reaction adenosine(out) + Na(+)(out) = adenosine(in) + Na(+)(in). With respect to regulation, due to its high apparent affinity but slow transport, adenosine could act as a negative regulator of pyrimidine transport under some conditions. In terms of biological role, sodium and pyrimidine nucleoside symporter of the plasma membrane that imports uridine, thymidine and cytidine into cells by coupling their transport to the transmembrane sodium electrochemical gradient. Also transports adenosine, an atypical substrate transported with high apparent affinity, but low maximum velocity. Therefore, exhibits the transport characteristics of the nucleoside transport system cit or N2 subtype (N2/cit). Involved in renal nucleoside (re)absorption. In Sus scrofa (Pig), this protein is Sodium/nucleoside cotransporter 1 (SLC28A1).